A 317-amino-acid chain; its full sequence is 2,3-dihydroxyphenylpropionate/2,3-dihydroxicinnamic acid 1,2-dioxygenase (317 aa).

His-115 serves as the catalytic Proton donor. The active-site Proton acceptor is the His-179.

Belongs to the LigB/MhpB extradiol dioxygenase family. In terms of assembly, homotetramer. Fe(2+) is required as a cofactor.

The catalysed reaction is 3-(2,3-dihydroxyphenyl)propanoate + O2 = (2Z,4E)-2-hydroxy-6-oxonona-2,4-dienedioate + H(+). It carries out the reaction (2E)-3-(2,3-dihydroxyphenyl)prop-2-enoate + O2 = (2Z,4E,7E)-2-hydroxy-6-oxonona-2,4,7-trienedioate + H(+). It participates in aromatic compound metabolism; 3-phenylpropanoate degradation. In terms of biological role, catalyzes the non-heme iron(II)-dependent oxidative cleavage of 2,3-dihydroxyphenylpropionic acid and 2,3-dihydroxicinnamic acid into 2-hydroxy-6-ketononadienedioate and 2-hydroxy-6-ketononatrienedioate, respectively. The sequence is that of 2,3-dihydroxyphenylpropionate/2,3-dihydroxicinnamic acid 1,2-dioxygenase from Paraburkholderia phymatum (strain DSM 17167 / CIP 108236 / LMG 21445 / STM815) (Burkholderia phymatum).